The following is a 363-amino-acid chain: MERKHNPNSWSDLPHDLLNLVFERLSFANFNRARSVCSSWYSASRQSVPKNQIHWLILFPEDNNNKNNSSCTLFNPDEKDKLYKTQHLDEEFAKSVCRATYGSWFLMVDPLFNLYILNLFTRERINLHPVELLWKDYELGVSSRNRMKSRGGNVRSPVFWIDEITKDYVVLWGLRDWCVFYSKKGDTSWNQIPQTPDCYRLRYKDHKLYFQGYFSSFKIFDLSGEIPQQTFDSLVFVDHCHFRRWVLYSTLVVTLTGKVLNVEKMMDCSFTVFEVCSSGRRIHSLGDESILLEQGITVLANDTNGFIRNSIYFNNDCENIEKHTYDMFIFNLETQKTEPLHTFDSSSFQFSRAHWFVPSFTLT.

Positions Pro-7–Leu-58 constitute an F-box domain.

This chain is Putative F-box protein At4g22170, found in Arabidopsis thaliana (Mouse-ear cress).